Here is a 210-residue protein sequence, read N- to C-terminus: Cuticle collagen 2C (210 aa).

The segment at 11–210 (CTGGQAGPPG…GVFFEDGTRR (200 aa)) is disordered. 2 stretches are compositionally biased toward pro residues: residues 40–76 (PGRPPVQPCDPIPIPPCKPCPQGRPGPPGPIGPPGEP) and 88–103 (DAPPGPPGPKGPPGPP). Positions 105–122 (KAGAPGAAGQPGANAPSE) are enriched in low complexity. A compositionally biased stretch (pro residues) spans 123-144 (PLVPGPPGPPGPTGPEGPPGPN). Low complexity predominate over residues 167–179 (HPGAPGNAGHPGQ).

The protein belongs to the cuticular collagen family.

In terms of biological role, nematode cuticles are composed largely of collagen-like proteins. The cuticle functions both as an exoskeleton and as a barrier to protect the worm from its environment. This Haemonchus contortus (Barber pole worm) protein is Cuticle collagen 2C (2C).